A 425-amino-acid polypeptide reads, in one-letter code: Glutamyl-tRNA reductase (425 aa).

Substrate contacts are provided by residues 49–52 (TCNR), S107, 112–114 (EPQ), and Q118. The Nucleophile role is filled by C50. 187 to 192 (GAGETI) lines the NADP(+) pocket.

The protein belongs to the glutamyl-tRNA reductase family. In terms of assembly, homodimer.

It carries out the reaction (S)-4-amino-5-oxopentanoate + tRNA(Glu) + NADP(+) = L-glutamyl-tRNA(Glu) + NADPH + H(+). It participates in porphyrin-containing compound metabolism; protoporphyrin-IX biosynthesis; 5-aminolevulinate from L-glutamyl-tRNA(Glu): step 1/2. In terms of biological role, catalyzes the NADPH-dependent reduction of glutamyl-tRNA(Glu) to glutamate 1-semialdehyde (GSA). This is Glutamyl-tRNA reductase from Pseudomonas syringae pv. syringae (strain B728a).